Here is a 66-residue protein sequence, read N- to C-terminus: Surface composition regulator (66 aa).

The protein belongs to the GlgS family.

Its function is as follows. Major determinant of cell surface composition. Negatively regulates motility, adhesion and synthesis of biofilm exopolysaccharides. This Shigella dysenteriae serotype 1 (strain Sd197) protein is Surface composition regulator.